The sequence spans 443 residues: Protein king tubby (443 aa).

Disordered stretches follow at residues threonine 57–arginine 80 and histidine 98–valine 191. Residues alanine 68 to arginine 80 show a composition bias toward polar residues. Low complexity predominate over residues glutamine 113–glutamine 128. Serine 136 carries the post-translational modification Phosphoserine. The span at asparagine 177–glutamate 186 shows a compositional bias: gly residues.

This sequence belongs to the TUB family.

The protein localises to the cytoplasm. The protein resides in the nucleus. It localises to the cell projection. Its subcellular location is the cilium membrane. It is found in the rhabdomere. In Drosophila simulans (Fruit fly), this protein is Protein king tubby.